Here is a 472-residue protein sequence, read N- to C-terminus: Sarcalumenin (472 aa).

The signal sequence occupies residues 1–20 (MKRLNLLCCCVASLLLLGTA). The N-linked (GlcNAc...) asparagine glycan is linked to L59. The 242-residue stretch at 89–330 (ITSKPMVLFL…IENRMENKIA (242 aa)) folds into the Dynamin-type G domain. The interval 99–106 (GPWSVGKS) is G1 motif. A G2 motif region spans residues 127–128 (EP). Residues 189-192 (DTPG) are G3 motif. The segment at 254 to 257 (NKAD) is G4 motif. A region of interest (G5 motif) is located at residue L278. N-linked (GlcNAc...) asparagine glycans are attached at residues N280 and N388.

This sequence belongs to the TRAFAC class dynamin-like GTPase superfamily. Dynamin/Fzo/YdjA family. In terms of processing, N-glycosylated.

Its subcellular location is the sarcoplasmic reticulum lumen. It localises to the sarcoplasmic reticulum membrane. In Gallus gallus (Chicken), this protein is Sarcalumenin (SRL).